A 239-amino-acid polypeptide reads, in one-letter code: Pyridoxine 5'-phosphate synthase (239 aa).

Position 7 (Asn7) interacts with 3-amino-2-oxopropyl phosphate. 9 to 10 (DH) provides a ligand contact to 1-deoxy-D-xylulose 5-phosphate. Residue Arg18 coordinates 3-amino-2-oxopropyl phosphate. The Proton acceptor role is filled by His43. The 1-deoxy-D-xylulose 5-phosphate site is built by Arg45 and His50. Catalysis depends on Glu70, which acts as the Proton acceptor. Thr100 contacts 1-deoxy-D-xylulose 5-phosphate. Residue His191 is the Proton donor of the active site. Residues Gly192 and 213–214 (GH) contribute to the 3-amino-2-oxopropyl phosphate site.

It belongs to the PNP synthase family. As to quaternary structure, homooctamer; tetramer of dimers.

It is found in the cytoplasm. The enzyme catalyses 3-amino-2-oxopropyl phosphate + 1-deoxy-D-xylulose 5-phosphate = pyridoxine 5'-phosphate + phosphate + 2 H2O + H(+). It functions in the pathway cofactor biosynthesis; pyridoxine 5'-phosphate biosynthesis; pyridoxine 5'-phosphate from D-erythrose 4-phosphate: step 5/5. Functionally, catalyzes the complicated ring closure reaction between the two acyclic compounds 1-deoxy-D-xylulose-5-phosphate (DXP) and 3-amino-2-oxopropyl phosphate (1-amino-acetone-3-phosphate or AAP) to form pyridoxine 5'-phosphate (PNP) and inorganic phosphate. This chain is Pyridoxine 5'-phosphate synthase, found in Trichormus variabilis (strain ATCC 29413 / PCC 7937) (Anabaena variabilis).